We begin with the raw amino-acid sequence, 97 residues long: Large ribosomal subunit protein uL23 (97 aa).

This sequence belongs to the universal ribosomal protein uL23 family. As to quaternary structure, part of the 50S ribosomal subunit. Contacts protein L29, and trigger factor when it is bound to the ribosome.

Functionally, one of the early assembly proteins it binds 23S rRNA. One of the proteins that surrounds the polypeptide exit tunnel on the outside of the ribosome. Forms the main docking site for trigger factor binding to the ribosome. The sequence is that of Large ribosomal subunit protein uL23 from Sulfurihydrogenibium sp. (strain YO3AOP1).